We begin with the raw amino-acid sequence, 445 residues long: Chromosomal replication initiator protein DnaA (445 aa).

The segment at 1–69 (MEKIWLEAQS…IEAISSLTNI (69 aa)) is domain I, interacts with DnaA modulators. The interval 69 to 108 (IKYQVDFKITEKSQVEKKKVDLQATEKIENDSTRNVDFNT) is domain II. Residues 109–325 (NLNPKYTFDS…GMLIRLGAYA (217 aa)) are domain III, AAA+ region. ATP contacts are provided by glycine 153, glycine 155, lysine 156, and threonine 157. The segment at 326-445 (SLTGSEISLN…VEKMKKELMS (120 aa)) is domain IV, binds dsDNA.

The protein belongs to the DnaA family. Oligomerizes as a right-handed, spiral filament on DNA at oriC.

It localises to the cytoplasm. Functionally, plays an essential role in the initiation and regulation of chromosomal replication. ATP-DnaA binds to the origin of replication (oriC) to initiate formation of the DNA replication initiation complex once per cell cycle. Binds the DnaA box (a 9 base pair repeat at the origin) and separates the double-stranded (ds)DNA. Forms a right-handed helical filament on oriC DNA; dsDNA binds to the exterior of the filament while single-stranded (ss)DNA is stabiized in the filament's interior. The ATP-DnaA-oriC complex binds and stabilizes one strand of the AT-rich DNA unwinding element (DUE), permitting loading of DNA polymerase. After initiation quickly degrades to an ADP-DnaA complex that is not apt for DNA replication. Binds acidic phospholipids. This Geotalea daltonii (strain DSM 22248 / JCM 15807 / FRC-32) (Geobacter daltonii) protein is Chromosomal replication initiator protein DnaA.